Reading from the N-terminus, the 156-residue chain is Cyanate hydratase (156 aa).

Residues Arg96, Glu99, and Ser122 contribute to the active site.

It belongs to the cyanase family.

It carries out the reaction cyanate + hydrogencarbonate + 3 H(+) = NH4(+) + 2 CO2. Functionally, catalyzes the reaction of cyanate with bicarbonate to produce ammonia and carbon dioxide. The sequence is that of Cyanate hydratase from Burkholderia cenocepacia (strain ATCC BAA-245 / DSM 16553 / LMG 16656 / NCTC 13227 / J2315 / CF5610) (Burkholderia cepacia (strain J2315)).